Reading from the N-terminus, the 130-residue chain is Small ribosomal subunit protein uS9 (130 aa).

Positions 108–130 (SREKERKKYGQRGARARFQYSKR) are disordered.

It belongs to the universal ribosomal protein uS9 family.

The sequence is that of Small ribosomal subunit protein uS9 from Solidesulfovibrio magneticus (strain ATCC 700980 / DSM 13731 / RS-1) (Desulfovibrio magneticus).